Here is a 217-residue protein sequence, read N- to C-terminus: Ribosomal RNA small subunit methyltransferase G (217 aa).

S-adenosyl-L-methionine is bound by residues Gly-85, Leu-90, 135 to 136 (IE), and Arg-149.

Belongs to the methyltransferase superfamily. RNA methyltransferase RsmG family.

It localises to the cytoplasm. The catalysed reaction is guanosine(527) in 16S rRNA + S-adenosyl-L-methionine = N(7)-methylguanosine(527) in 16S rRNA + S-adenosyl-L-homocysteine. Specifically methylates the N7 position of guanine in position 527 of 16S rRNA. This Acidiphilium cryptum (strain JF-5) protein is Ribosomal RNA small subunit methyltransferase G.